Reading from the N-terminus, the 216-residue chain is Histone doublet H4-H3 (216 aa).

Residues 1-12 are compositionally biased toward basic residues; it reads MSKAGKKVKAQQ. A disordered region spans residues 1–23; sequence MSKAGKKVKAQQHGHLADHVSVG.

Its subcellular location is the host nucleus. The protein localises to the host cytoplasm. The protein resides in the virion. Histone-like protein that is recruited to viral factories during viral replication and participates in viral DNA packaging and virion production probably by forming unstable nucleosome-like particles. May compact the viral DNA. This is Histone doublet H4-H3 from Melbournevirus (MelV).